A 578-amino-acid polypeptide reads, in one-letter code: Arginine--tRNA ligase (578 aa).

The 'HIGH' region motif lies at 127-137 (PNLAKEMHVGH).

This sequence belongs to the class-I aminoacyl-tRNA synthetase family. As to quaternary structure, monomer.

The protein localises to the cytoplasm. It catalyses the reaction tRNA(Arg) + L-arginine + ATP = L-arginyl-tRNA(Arg) + AMP + diphosphate. This is Arginine--tRNA ligase from Pseudomonas entomophila (strain L48).